The primary structure comprises 158 residues: Transcription elongation factor GreA (158 aa).

A coiled-coil region spans residues 47-74 (AEYHAAKEEQSHNEGRIAELEDKLARAD).

This sequence belongs to the GreA/GreB family.

Necessary for efficient RNA polymerase transcription elongation past template-encoded arresting sites. The arresting sites in DNA have the property of trapping a certain fraction of elongating RNA polymerases that pass through, resulting in locked ternary complexes. Cleavage of the nascent transcript by cleavage factors such as GreA or GreB allows the resumption of elongation from the new 3'terminus. GreA releases sequences of 2 to 3 nucleotides. This chain is Transcription elongation factor GreA, found in Nitrobacter winogradskyi (strain ATCC 25391 / DSM 10237 / CIP 104748 / NCIMB 11846 / Nb-255).